The sequence spans 489 residues: Protein LMBR1L (489 aa).

Residues 1–21 (MEAPDCEVLSVREQLFHERIR) are Extracellular-facing. The interval 1–59 (MEAPDCEVLSVREQLFHERIRECIISTLLFATLYILCHIFLTRFKKPAEFTTVDDADAT) is interaction with LGB. Residues 1 to 76 (MEAPDCEVLS…LCTFTLAIAL (76 aa)) are LCN1-binding. The helical transmembrane segment at 22 to 42 (ECIISTLLFATLYILCHIFLT) threads the bilayer. Residues 43-66 (RFKKPAEFTTVDDADATVNKIALE) are Cytoplasmic-facing. The chain crosses the membrane as a helical span at residues 67–87 (LCTFTLAIALGAVLLLPFSII). Residues 88 to 114 (SNEVLLSLPRNYYIQWLNGSLIHGLWN) lie on the Extracellular side of the membrane. A helical membrane pass occupies residues 115–135 (LVFLFSNLSLIFLMPFAYFFT). Residues 136 to 154 (ESEGFAGSRKGVLGRVYET) are Cytoplasmic-facing. The chain crosses the membrane as a helical span at residues 155 to 175 (VVMLMLLTLLVLGMVWVASAI). Residues 176–196 (VDNNKASRESLYDFWEYYLPY) are Extracellular-facing. The helical transmembrane segment at 197–217 (LYSCISFLGVLLLLVCTPLGL) threads the bilayer. At 218-305 (ARMFSVTGKL…NLGYPLAMLC (88 aa)) the chain is on the cytoplasmic side. A helical transmembrane segment spans residues 306–326 (LLVLTGLSVLIVAIHILELLI). Topologically, residues 327–350 (DEAAMPRGMQGASLGQVSFSKLGS) are extracellular. The helical transmembrane segment at 351–371 (FGAVVQVVLIFYLMVSSVVGF) threads the bilayer. The Cytoplasmic portion of the chain corresponds to 372–388 (YSSPLFRSLRPRWHDTA). A helical transmembrane segment spans residues 389-409 (MTQIIGNCVCLLVLSSALPVF). The Extracellular segment spans residues 410-431 (SRTLGLTRFDLLGDFGRFNWLG). Residues 432-452 (NFYIVFLYNAAFAGLTTLCLV) traverse the membrane as a helical segment. Topologically, residues 453-489 (KTFTAAVRAELIRAFGLDRLPLPVSGFPRASRKTQHQ) are cytoplasmic.

Belongs to the LIMR family. As to quaternary structure, dimer. Can also form higher oligomers. Interacts with LCN1; this interaction mediates the endocytosis of LCN1. Interacts with UBAC2, FAF2, VCP, AMFR, ZNRF3, CTNNB1, LRP6, GSK3A, GSK3B, FZD6, DVL2 and RNF43. Interaction with LGB and SCGB1A1 is controversial.

Its subcellular location is the cell membrane. It localises to the endoplasmic reticulum membrane. Functionally, plays an essential role in lymphocyte development by negatively regulating the canonical Wnt signaling pathway. In association with UBAC2 and E3 ubiquitin-protein ligase AMFR, promotes the ubiquitin-mediated degradation of CTNNB1 and Wnt receptors FZD6 and LRP6. LMBR1L stabilizes the beta-catenin destruction complex that is required for regulating CTNNB1 levels. Acts as a LCN1 receptor and can mediate its endocytosis. The polypeptide is Protein LMBR1L (LMBR1L) (Macaca fascicularis (Crab-eating macaque)).